Here is a 317-residue protein sequence, read N- to C-terminus: Transaldolase (317 aa).

Lys-131 acts as the Schiff-base intermediate with substrate in catalysis.

The protein belongs to the transaldolase family. Type 1 subfamily. Homodimer.

It is found in the cytoplasm. The catalysed reaction is D-sedoheptulose 7-phosphate + D-glyceraldehyde 3-phosphate = D-erythrose 4-phosphate + beta-D-fructose 6-phosphate. Its pathway is carbohydrate degradation; pentose phosphate pathway; D-glyceraldehyde 3-phosphate and beta-D-fructose 6-phosphate from D-ribose 5-phosphate and D-xylulose 5-phosphate (non-oxidative stage): step 2/3. Transaldolase is important for the balance of metabolites in the pentose-phosphate pathway. In Baumannia cicadellinicola subsp. Homalodisca coagulata, this protein is Transaldolase.